A 132-amino-acid polypeptide reads, in one-letter code: ATP synthase epsilon chain (132 aa).

This sequence belongs to the ATPase epsilon chain family. In terms of assembly, F-type ATPases have 2 components, CF(1) - the catalytic core - and CF(0) - the membrane proton channel. CF(1) has five subunits: alpha(3), beta(3), gamma(1), delta(1), epsilon(1). CF(0) has three main subunits: a, b and c.

The protein localises to the cell inner membrane. Its function is as follows. Produces ATP from ADP in the presence of a proton gradient across the membrane. The protein is ATP synthase epsilon chain of Parvibaculum lavamentivorans (strain DS-1 / DSM 13023 / NCIMB 13966).